The chain runs to 47 residues: GAACFCDSDGPSVSGNTLSGILWLAGCPSGWHNCKAHGPNIGWCCKK.

3 disulfides stabilise this stretch: C4/C44, C6/C34, and C27/C45.

Belongs to the sea anemone sodium channel inhibitory toxin family. Type I subfamily.

The protein resides in the secreted. It is found in the nematocyst. Functionally, binds specifically to voltage-gated sodium channels (Nav), thereby delaying their inactivation during signal transduction. Thus it strongly stimulates mammalian cardiac muscle contraction. In Anthopleura xanthogrammica (Giant green sea anemone), this protein is Delta-actitoxin-Axm1d.